Here is a 163-residue protein sequence, read N- to C-terminus: Phosphopantetheine adenylyltransferase (163 aa).

Serine 9 serves as a coordination point for substrate. ATP is bound by residues 9–10 and histidine 17; that span reads SF. Substrate is bound by residues lysine 41, threonine 73, and arginine 87. Residues 88-90, glutamate 98, and 123-129 contribute to the ATP site; these read GLR and YAYFSSS.

Belongs to the bacterial CoaD family. As to quaternary structure, homohexamer. It depends on Mg(2+) as a cofactor.

The protein localises to the cytoplasm. It carries out the reaction (R)-4'-phosphopantetheine + ATP + H(+) = 3'-dephospho-CoA + diphosphate. It functions in the pathway cofactor biosynthesis; coenzyme A biosynthesis; CoA from (R)-pantothenate: step 4/5. Reversibly transfers an adenylyl group from ATP to 4'-phosphopantetheine, yielding dephospho-CoA (dPCoA) and pyrophosphate. The protein is Phosphopantetheine adenylyltransferase of Lactiplantibacillus plantarum (strain ATCC BAA-793 / NCIMB 8826 / WCFS1) (Lactobacillus plantarum).